A 393-amino-acid polypeptide reads, in one-letter code: Digeranylgeranylglycerophospholipid reductase (393 aa).

Residues alanine 14, aspartate 33, cysteine 44, alanine 45, glycine 47, arginine 100, alanine 124, aspartate 280, glycine 292, and isoleucine 293 each coordinate FAD.

The protein belongs to the geranylgeranyl reductase family. DGGGPL reductase subfamily. FAD serves as cofactor.

The catalysed reaction is a 2,3-bis-O-phytanyl-sn-glycerol 1-phospholipid + 8 A = a 2,3-bis-O-(geranylgeranyl)-sn-glycerol 1-phospholipid + 8 AH2. The enzyme catalyses 2,3-bis-O-(phytanyl)-sn-glycerol 1-phosphate + 8 A = 2,3-bis-O-(geranylgeranyl)-sn-glycerol 1-phosphate + 8 AH2. It carries out the reaction CDP-2,3-bis-O-(geranylgeranyl)-sn-glycerol + 8 AH2 = CDP-2,3-bis-O-(phytanyl)-sn-glycerol + 8 A. It catalyses the reaction archaetidylserine + 8 AH2 = 2,3-bis-O-phytanyl-sn-glycero-3-phospho-L-serine + 8 A. Its pathway is membrane lipid metabolism; glycerophospholipid metabolism. Its function is as follows. Is involved in the reduction of 2,3-digeranylgeranylglycerophospholipids (unsaturated archaeols) into 2,3-diphytanylglycerophospholipids (saturated archaeols) in the biosynthesis of archaeal membrane lipids. Catalyzes the formation of archaetidic acid (2,3-di-O-phytanyl-sn-glyceryl phosphate) from 2,3-di-O-geranylgeranylglyceryl phosphate (DGGGP) via the hydrogenation of each double bond of the isoprenoid chains. Is also probably able to reduce double bonds of geranyl groups in CDP-2,3-bis-O-(geranylgeranyl)-sn-glycerol and archaetidylserine, thus acting at various stages in the biosynthesis of archaeal membrane lipids. This is Digeranylgeranylglycerophospholipid reductase from Methanobrevibacter smithii (strain ATCC 35061 / DSM 861 / OCM 144 / PS).